A 241-amino-acid polypeptide reads, in one-letter code: Terpene cyclase olcD (241 aa).

7 helical membrane-spanning segments follow: residues 19 to 39 (LSDILLVTLASGWLVCYFATI), 49 to 71 (WMPLLPLSCNVAWELVFITLYPP), 76 to 95 (ILGFWLLVNLGVIYSALRFA), 108 to 128 (YLPVLFVLAVGFWAWGHLALI), 137 to 157 (FYYGGMACQLMTSAAALSGLV), 166 to 186 (SYTIWLSRVIGTSSALAGLFF), and 202 to 222 (LMRWLAAAFGILDGVYGVQFW).

The protein belongs to the paxB family.

It localises to the membrane. Its pathway is secondary metabolite biosynthesis; terpenoid biosynthesis. Its function is as follows. Terpene cyclase; part of the gene cluster that mediates the biosynthesis of 15-deoxyoxalicine B. The first step of the pathway is the synthesis of nicotinyl-CoA from nicotinic acid by the nicotinic acid-CoA ligase olcI. Nicotinyl-CoA is then a substrate of polyketide synthase olcA to produce 4-hydroxy-6-(3-pyridinyl)-2H-pyran-2-one (HPPO) which is further prenylated by the polyprenyl transferase olcH to yield geranylgeranyl-HPPO. Geranylgeranyl pyrophosphate is provided by the cluster-specific geranylgeranyl pyrophosphate synthase olcC. The FAD-dependent monooxygenase olcE catalyzes the epoxidation of geranylgeranyl-HPPO and the terpene cyclase olcD catalyzes the cyclization of the terpenoid component, resulting in the formation of the tricyclic terpene moiety seen in predecaturin E. The cytochrome P450 monooxygenase then catalyzes the allylic oxidation of predecaturin E, which is followed by spirocylization with concomitant loss of one molecule of water to form decaturin E. Decaturin E is the substrate of the cytochrome P450 monooxygenase olcJ which hydroxylates it at the C-29 position to form decaturin F. The short-chain dehydrogenase/reductase olcF may catalyze the oxidation of decaturin F to generate the 29-hydroxyl-27-one intermediate, and subsequent hemiacetal formation probably leads to the formation of decaturin C. The dioxygenase olcK may be a peroxisomal enzyme that catalyzes the hydroxylation of decaturin C into decaturin A once decaturin C is shuttled into the peroxisome by the MFS transporter olcL. Finally the cytochrome P450 monooxygenase olcB catalyzes the oxidative rearrangement to yield 15-deoxyoxalicine B. In the absence of olcJ, decaturin E may be shunted to a pathway in which it is oxidized to a ketone, possibly by olcF, to form decaturin D, which undergoes further allylic oxidation to yield decaturin G. Moreover, in the absence of oclK or oclL, oclB can convert decaturin C into 15-deoxyoxalicine A. This is Terpene cyclase olcD from Penicillium canescens.